The sequence spans 192 residues: Adenylate kinase (192 aa).

12–17 serves as a coordination point for ATP; sequence GSGKTT. Residues 33 to 62 are NMP; it reads STGDLLRAEVAKDSELGKKIDKIISGGNLV. AMP is bound by residues T34, R39, 60-62, 87-90, and Q94; these read NLV and GYPR. Residues 129–135 are LID; that stretch reads GRARGAD. R130 contributes to the ATP binding site. Residues R132 and R144 each coordinate AMP. R172 contacts ATP.

This sequence belongs to the adenylate kinase family. In terms of assembly, monomer.

The protein resides in the cytoplasm. The enzyme catalyses AMP + ATP = 2 ADP. It functions in the pathway purine metabolism; AMP biosynthesis via salvage pathway; AMP from ADP: step 1/1. Catalyzes the reversible transfer of the terminal phosphate group between ATP and AMP. Plays an important role in cellular energy homeostasis and in adenine nucleotide metabolism. The chain is Adenylate kinase from Campylobacter hominis (strain ATCC BAA-381 / DSM 21671 / CCUG 45161 / LMG 19568 / NCTC 13146 / CH001A).